We begin with the raw amino-acid sequence, 338 residues long: MESGKTTIAKIIKRNEPGGRVPIWLMRQAGRSLPEYRKAVENMNNFMEICYNTDLVTELTLQPVTRFDMDAAIIFSDILIIADVLGCDVNFVRGVGPIIKPVESPKELKGPQEIETKTLPILNAIKKVRSQLPKEKSLIGFAGGPWTVASYIIEGRSSKTFSKVLNFYPSCLKEIIERITEVTIIYLIKQIEFGADVIQLFDSNAGALSEPLFKEYVIEPTKRIILAIKDRFSDFPIIGFPRSAGNLYKDYCEQTGVSAVSIDYNVPIKWAKANLNIPLQGNLDPNLLAYNKTEAIKEAKRIIDCFRDLPFIFNLGHGVLPDTPVENIAALVNLVKSY.

Substrate contacts are provided by residues 27–31 (RQAGR), D77, Y151, S203, and H317.

This sequence belongs to the uroporphyrinogen decarboxylase family. Homodimer.

The protein resides in the cytoplasm. It carries out the reaction uroporphyrinogen III + 4 H(+) = coproporphyrinogen III + 4 CO2. It participates in porphyrin-containing compound metabolism; protoporphyrin-IX biosynthesis; coproporphyrinogen-III from 5-aminolevulinate: step 4/4. Catalyzes the decarboxylation of four acetate groups of uroporphyrinogen-III to yield coproporphyrinogen-III. This is Uroporphyrinogen decarboxylase from Wolbachia pipientis wMel.